The primary structure comprises 160 residues: Negative modulator of initiation of replication (160 aa).

The protein belongs to the SeqA family. As to quaternary structure, homodimer. Polymerizes to form helical filaments.

The protein resides in the cytoplasm. Functionally, negative regulator of replication initiation, which contributes to regulation of DNA replication and ensures that replication initiation occurs exactly once per chromosome per cell cycle. Binds to pairs of hemimethylated GATC sequences in the oriC region, thus preventing assembly of replication proteins and re-initiation at newly replicated origins. Repression is relieved when the region becomes fully methylated. This chain is Negative modulator of initiation of replication, found in Idiomarina loihiensis (strain ATCC BAA-735 / DSM 15497 / L2-TR).